A 506-amino-acid chain; its full sequence is Notoamide biosynthesis cluster transcriptional coactivator notQ' (506 aa).

A DNA-binding region (zn(2)-C6 fungal-type) is located at residues 11–38 (CLVCRHRKVACDRGRPQCGLCRKNGFDC). The tract at residues 73–102 (GRLSQSQPSQPATERDDLATTPSTGRLAPP) is disordered. The segment covering 75 to 84 (LSQSQPSQPA) has biased composition (polar residues).

It localises to the nucleus. Its function is as follows. Transcription factor that probably regulates the expression of the gene cluster that mediates the biosynthesis of notoamide, a fungal indole alkaloid that belongs to a family of natural products containing a characteristic bicyclo[2.2.2]diazaoctane core. The polypeptide is Notoamide biosynthesis cluster transcriptional coactivator notQ' (Aspergillus versicolor).